Here is a 424-residue protein sequence, read N- to C-terminus: Ubiquitin carboxyl-terminal hydrolase 12/46 homolog (424 aa).

A USP domain is found at Phe-24–Arg-421. Cys-33 acts as the Nucleophile in catalysis. The interval Asn-131–Asn-189 is disordered. The span at Gly-133–Gln-144 shows a compositional bias: polar residues. Residues Gly-145 to Asn-189 show a composition bias toward low complexity. Residue His-369 is the Proton acceptor of the active site.

Belongs to the peptidase C19 family. As to quaternary structure, catalytic component of the Usp12-46 deubiquitylase complex consisting of Usp12-46, Wdr20 and Uaf1. The Usp12-46 deubiquitylase complex associates with arr/arrow; the interaction leads to deubiquitination and stabilization of arr/arrow.

The enzyme catalyses Thiol-dependent hydrolysis of ester, thioester, amide, peptide and isopeptide bonds formed by the C-terminal Gly of ubiquitin (a 76-residue protein attached to proteins as an intracellular targeting signal).. Functionally, catalytic component of the Usp12-46 deubiquitylase complex. Deubiquitylates the wg/wingless-signaling receptor arr/arrow, which stabilizes the receptor and increases its concentration at the cell surface; this enhances the sensitivity of cells to wg/wingless-signal stimulation. This increases the amplitude and spatial range of the signaling response to the wg/wingless morphogen gradient, facilitating the precise, concentration-dependent regulation of its target genes. Required for wg/wingless-mediated signaling in the wing imaginal disc and for wg/wingless-dependent regulation of adult intestinal stem cell proliferation. Negative regulator of Notch signaling, possibly by regulating lysosomal degradation of N/Notch and affecting cell surface receptor levels; this may be context and cell-type specific function involved in external sensory organ development but not in wing imaginal-disc dorsoventral boundary signaling. Protects against HTT/huntingtin-induced polyglutamine expansion-dependent neurodegeneration. This chain is Ubiquitin carboxyl-terminal hydrolase 12/46 homolog, found in Drosophila melanogaster (Fruit fly).